The primary structure comprises 502 residues: Maturase K (502 aa).

This sequence belongs to the intron maturase 2 family. MatK subfamily.

Its subcellular location is the plastid. It localises to the chloroplast. Functionally, usually encoded in the trnK tRNA gene intron. Probably assists in splicing its own and other chloroplast group II introns. The chain is Maturase K from Vitis vinifera (Grape).